The sequence spans 109 residues: Phosphoribosyl-AMP cyclohydrolase (109 aa).

Position 80 (Asp80) interacts with Mg(2+). Cys81 serves as a coordination point for Zn(2+). Asp82 and Asp84 together coordinate Mg(2+). 2 residues coordinate Zn(2+): Cys97 and Cys104.

It belongs to the PRA-CH family. In terms of assembly, homodimer. Mg(2+) serves as cofactor. Zn(2+) is required as a cofactor.

It is found in the cytoplasm. It carries out the reaction 1-(5-phospho-beta-D-ribosyl)-5'-AMP + H2O = 1-(5-phospho-beta-D-ribosyl)-5-[(5-phospho-beta-D-ribosylamino)methylideneamino]imidazole-4-carboxamide. It functions in the pathway amino-acid biosynthesis; L-histidine biosynthesis; L-histidine from 5-phospho-alpha-D-ribose 1-diphosphate: step 3/9. Functionally, catalyzes the hydrolysis of the adenine ring of phosphoribosyl-AMP. In Clostridium beijerinckii (strain ATCC 51743 / NCIMB 8052) (Clostridium acetobutylicum), this protein is Phosphoribosyl-AMP cyclohydrolase.